We begin with the raw amino-acid sequence, 948 residues long: Non-lysosomal glucosylceramidase (948 aa).

Residues 1-736 are Extracellular-facing; sequence MAEPLAVETK…VMDGPSAYCS (736 aa). The segment covering 177-195 has biased composition (basic and acidic residues); the sequence is STRDKTSDPDGDPDGERTK. A disordered region spans residues 177–197; that stretch reads STRDKTSDPDGDPDGERTKCQ. N-linked (GlcNAc...) asparagine glycosylation occurs at Asn-200. At Ser-214 the chain carries Phosphoserine. Asn-288, Asn-555, and Asn-629 each carry an N-linked (GlcNAc...) asparagine glycan. 2 positions are modified to phosphoserine: Ser-667 and Ser-669. The N-linked (GlcNAc...) asparagine glycan is linked to Asn-673. Residues 737–753 form a helical membrane-spanning segment; the sequence is GLWLAALQAMSAMATIL. The Cytoplasmic portion of the chain corresponds to 754–948; it reads DQPNDCLRYQ…ALERRRAQRD (195 aa).

It belongs to the non-lysosomal glucosylceramidase family.

Its subcellular location is the cell membrane. The enzyme catalyses a beta-D-glucosyl-(1&lt;-&gt;1')-N-acylsphing-4-enine + H2O = an N-acylsphing-4-enine + D-glucose. Non-lysosomal glucosylceramidase that catalyzes the conversion of glucosylceramide to free glucose and ceramide. In Drosophila melanogaster (Fruit fly), this protein is Non-lysosomal glucosylceramidase.